We begin with the raw amino-acid sequence, 524 residues long: Nif-specific regulatory protein (524 aa).

Positions 1–182 are a domain; the sequence is MIHKSDSDTT…AQTIRLMILP (182 aa). Positions 35 to 176 constitute a GAF domain; that stretch reads EASKTLQEVL…TVANLIAQTI (142 aa). Positions 212–481 constitute a Sigma-54 factor interaction domain; the sequence is MVGKSPAMRQ…DGWLDNSLDE (270 aa). ATP contacts are provided by residues 240–247 and 303–312; these read GESGTGKE and ADGGTLFLDE. A C-terminal DNA-binding domain region spans residues 482–524; sequence RQRLIAALEKAGWVQAKAARLLGMTPRQVAYRIQIMDITMPRL. Positions 496–515 form a DNA-binding region, H-T-H motif; the sequence is QAKAARLLGMTPRQVAYRIQ.

As to quaternary structure, interacts with sigma-54.

Required for activation of most nif operons, which are directly involved in nitrogen fixation. The sequence is that of Nif-specific regulatory protein (nifA) from Klebsiella pneumoniae.